The chain runs to 842 residues: Elongation factor 2 (842 aa).

The 237-residue stretch at 17–253 (TNVRNMSVIA…LWGDSYFNPK (237 aa)) folds into the tr-type G domain. Residues 26–33 (AHVDHGKS), 158–161 (NKVD), and 213–215 (SGL) each bind GTP. At histidine 699 the chain carries Diphthamide.

This sequence belongs to the TRAFAC class translation factor GTPase superfamily. Classic translation factor GTPase family. EF-G/EF-2 subfamily.

Its subcellular location is the cytoplasm. It catalyses the reaction GTP + H2O = GDP + phosphate + H(+). Its function is as follows. Catalyzes the GTP-dependent ribosomal translocation step during translation elongation. During this step, the ribosome changes from the pre-translocational (PRE) to the post-translocational (POST) state as the newly formed A-site-bound peptidyl-tRNA and P-site-bound deacylated tRNA move to the P and E sites, respectively. Catalyzes the coordinated movement of the two tRNA molecules, the mRNA and conformational changes in the ribosome. This Naumovozyma castellii (Yeast) protein is Elongation factor 2 (EFT1).